A 714-amino-acid polypeptide reads, in one-letter code: MEMASVFTLNVRLDNIAIITIDVPGEKMNTLKAEFASQVRAIIKQLRENKELRGVVFVSAKPDNFIAGADINMIGNCKTAQEAEALARQGQQLMAEIHALPIPVIAAIHGACLGGGLELALACHGRVCTDDPKTVLGLPEVQLGLLPGSGGTQRLPRLIGVSTALEMILTGKQLRAKQALKLGLVDDVVPHSILLEVAVELAKKDRPSSRPLPVRERILAGPLGRALLFKMVGKKTEHKTQGNYPATERILEVVETGLAQGTSSGYDAEARAFGELAMTPQSQALRSIFFASTDVKKDPGSDAPPAPLNSVGILGGGLMGGGIAYVTACKAGLPVRIKDINPQGINHALKYSWDQLEGKVRRRHLKASERDKQLALISGTTDYRGFAHRDLIIEAVFENLELKQQMVAEVEQNCAAHTIFASNTSSLPIGDIAAHATRPEQVIGLHFFSPVEKMPLVEIIPHAGTSAQTIATTVKLAKKQGKTPIVVRDKAGFYVNRILAPYINEAIRMLTEGERVEHIDAALVKFGFPVGPIQLLDEVGIDTGTKIIPVLEAAYGERFSAPANVVSSILNDDRKGRKNGRGFYLYGQKGRKSKKQVDPAIYPLIGAQGQGRLSAPQVAERCVMLMLNEAVRCVDEQVIRSVRDGDIGAVFGIGFPPFLGGPFRYIDSLGAGEVVAIMQRLATQYGSRFTPCERLVEMGARGESFWKTTATDLQ.

An enoyl-CoA hydratase region spans residues 1 to 190 (MEMASVFTLN…KLGLVDDVVP (190 aa)). Residues 306-714 (APLNSVGILG…FWKTTATDLQ (409 aa)) are 3-hydroxyacyl-CoA dehydrogenase.

In the N-terminal section; belongs to the enoyl-CoA hydratase/isomerase family. The protein in the central section; belongs to the 3-hydroxyacyl-CoA dehydrogenase family. In terms of assembly, heterotetramer of two alpha chains (FadJ) and two beta chains (FadI).

The protein resides in the cytoplasm. It catalyses the reaction a (3S)-3-hydroxyacyl-CoA = a (2E)-enoyl-CoA + H2O. The enzyme catalyses a 4-saturated-(3S)-3-hydroxyacyl-CoA = a (3E)-enoyl-CoA + H2O. It carries out the reaction a (3S)-3-hydroxyacyl-CoA + NAD(+) = a 3-oxoacyl-CoA + NADH + H(+). The catalysed reaction is (3S)-3-hydroxybutanoyl-CoA = (3R)-3-hydroxybutanoyl-CoA. The protein operates within lipid metabolism; fatty acid beta-oxidation. Functionally, catalyzes the formation of a hydroxyacyl-CoA by addition of water on enoyl-CoA. Also exhibits 3-hydroxyacyl-CoA epimerase and 3-hydroxyacyl-CoA dehydrogenase activities. The protein is Fatty acid oxidation complex subunit alpha of Escherichia coli (strain SE11).